A 219-amino-acid chain; its full sequence is UPF0173 metal-dependent hydrolase Mlab_1154 (219 aa).

Belongs to the UPF0173 family.

In Methanocorpusculum labreanum (strain ATCC 43576 / DSM 4855 / Z), this protein is UPF0173 metal-dependent hydrolase Mlab_1154.